Reading from the N-terminus, the 141-residue chain is Galactose-6-phosphate isomerase subunit LacA (141 aa).

The protein belongs to the LacAB/RpiB family. As to quaternary structure, heteromultimeric protein consisting of LacA and LacB.

It carries out the reaction aldehydo-D-galactose 6-phosphate = keto-D-tagatose 6-phosphate. The protein operates within carbohydrate metabolism; D-galactose 6-phosphate degradation; D-tagatose 6-phosphate from D-galactose 6-phosphate: step 1/1. The chain is Galactose-6-phosphate isomerase subunit LacA from Streptococcus equi subsp. equi (strain 4047).